We begin with the raw amino-acid sequence, 1144 residues long: Adenylate cyclase type 3 (1144 aa).

Topologically, residues 1–79 (MTEDQGFSDP…FKRQRHETLL (79 aa)) are cytoplasmic. Transmembrane regions (helical) follow at residues 80–100 (VLVV…AVVF), 105–125 (LAPL…FVLC), 139–159 (VPYL…GLNF), 173–193 (AFFV…IVII), and 226–246 (ILAN…SYYM). Asp324, Ile325, and Asp368 together coordinate Mg(2+). Residues 324-329 (DIVGFT) and 366-368 (LGD) each bind ATP. The helical transmembrane segment at 381 to 401 (EDHAVCSILMGLAMVEAISYV) threads the bilayer. Topologically, residues 402–630 (REKTKTGVDM…RYSVEKEKQS (229 aa)) are cytoplasmic. Arg412 contributes to the ATP binding site. A Glycyl lysine isopeptide (Lys-Gly) (interchain with G-Cter in SUMO3) cross-link involves residue Lys465. The tract at residues 504–563 (QNGLNGSALPNGAPASKPSSPALIETKEPNGSAHASGSTSEEAEEQEAQADNPSFPNPRR) is disordered. A Phosphoserine modification is found at Ser523. Residues 534–543 (GSAHASGSTS) are compositionally biased toward low complexity. At Ser578 the chain carries Phosphoserine. 3 helical membrane passes run 631–651 (GAAF…EILI), 662–682 (FVVG…AIFP), and 706–726 (WAML…LSCL). The N-linked (GlcNAc...) asparagine glycan is linked to Asn734. Helical transmembrane passes span 755–775 (VAVL…MVKL), 777–797 (LMLL…CPVF), and 833–853 (LPLV…MLSF). Over 854–1144 (YYFSRHVEKL…TLPHQVVDNP (291 aa)) the chain is Cytoplasmic. ATP contacts are provided by residues Lys975, 1062-1064 (DIW), and 1069-1073 (NVASR). Residue Ser1076 is modified to Phosphoserine; by CaMK2. An ATP-binding site is contributed by Lys1109.

It belongs to the adenylyl cyclase class-4/guanylyl cyclase family. It depends on Mg(2+) as a cofactor. The cofactor is Mn(2+). In terms of processing, N-glycosylated. Sumoylated. Sumoylation is required for targeting ot olfactory cilia. Post-translationally, rapidly phosphorylated after stimulation by odorants or forskolin. Phosphorylation by CaMK2 at Ser-1076 down-regulates enzyme activity. In terms of tissue distribution, detected on cilia on the olfactory epithelium (at protein level). Detected on cilia on the olfactory epithelium.

Its subcellular location is the cell membrane. The protein localises to the golgi apparatus. It is found in the cell projection. It localises to the cilium. The protein resides in the cytoplasm. It carries out the reaction ATP = 3',5'-cyclic AMP + diphosphate. With respect to regulation, specifically activated by the G alpha protein GNAL/G(olf) in signaling cascades triggered by odorant receptors. Activated by forskolin. After forskolin treatment, activity is further increased by calcium/calmodulin. In the absence of forskolin, calcium/calmodulin has little effect on enzyme activity. Its function is as follows. Catalyzes the formation of the signaling molecule cAMP in response to G-protein signaling. Participates in signaling cascades triggered by odorant receptors via its function in cAMP biosynthesis: specifically activated by G alpha protein GNAL/G(olf) in olfactory epithelium. Required for the perception of odorants. Required for normal sperm motility and normal male fertility. Plays a role in regulating insulin levels and body fat accumulation in response to a high fat diet. In Rattus norvegicus (Rat), this protein is Adenylate cyclase type 3.